A 212-amino-acid chain; its full sequence is Prolactin (212 aa).

The first 26 residues, 1–26, serve as a signal peptide directing secretion; that stretch reads MARCCKCPRLHLAVTVLACVLVFTEG. 2 disulfides stabilise this stretch: Cys71/Cys185 and Cys202/Cys212.

It belongs to the somatotropin/prolactin family. Pituitary gland.

The protein resides in the secreted. This Ictalurus punctatus (Channel catfish) protein is Prolactin (prl).